The chain runs to 489 residues: Serine/arginine-rich splicing factor 4 (489 aa).

The 71-residue stretch at 2–72 (PRVYIGRLSY…ERVIVEHARG (71 aa)) folds into the RRM 1 domain. Disordered regions lie at residues 72–95 (GPRR…GRDK) and 169–489 (KIRL…HSRS). Phosphoserine occurs at positions 78 and 84. The 74-residue stretch at 104-177 (YRLIVENLSS…RKIRLVEDKP (74 aa)) folds into the RRM 2 domain. Composition is skewed to basic residues over residues 179 to 206 (SRRR…KSRS) and 214 to 246 (SHSK…KKEK). The segment covering 247-279 (SRSPSKDNKSRSRSRSPDKSRSKSKDHAEDKLQ) has biased composition (basic and acidic residues). Residues Ser-289, Ser-291, and Ser-293 each carry the phosphoserine modification. The span at 293–332 (SRHDSKSRSRSQERRAEEERRRSVSRARSQEKSRSQEKSL) shows a compositional bias: basic and acidic residues. Residues 333-356 (LKSRSRSRSRSRSRSKDKRKGRKR) show a composition bias toward basic residues. Basic and acidic residues-rich tracts occupy residues 357 to 370 (SRDE…SKSE) and 394 to 426 (KDTD…RAEG). Phosphoserine is present on residues Ser-441, Ser-453, and Ser-455. Basic residues-rich tracts occupy residues 456–469 (RSKS…RSKS) and 479–489 (SRSRSRSHSRS).

It belongs to the splicing factor SR family. As to quaternary structure, found in a pre-mRNA splicing complex with SRSF4/SFRS4, SRSF5/SFRS5, SNRNP70, SNRPA1, SRRM1 and SRRM2. Interacts with PNN. In terms of processing, extensively phosphorylated on serine residues in the RS domain.

The protein localises to the nucleus speckle. Its function is as follows. Plays a role in alternative splice site selection during pre-mRNA splicing. Represses the splicing of MAPT/Tau exon 10. The sequence is that of Serine/arginine-rich splicing factor 4 (Srsf4) from Mus musculus (Mouse).